Consider the following 513-residue polypeptide: Pleiotropic regulator 1 (513 aa).

M1 carries the N-acetylmethionine modification. A phosphoserine mark is found at S119 and S200. 7 WD repeats span residues 201-240, 243-282, 285-324, 327-366, 369-409, 410-448, and 459-498; these read GHLG…LKLS, GHIS…VIRH, GHLS…SVHT, GHTN…TRVT, NHKK…QNLS, GHNA…NFQR, and DSES…TEET. S390 is modified (phosphoserine).

This sequence belongs to the WD repeat PRL1/PRL2 family. Identified in the spliceosome C complex. Component of the PRP19-CDC5L splicing complex composed of a core complex comprising a homotetramer of PRPF19, CDC5L, PLRG1 and BCAS2, and at least three less stably associated proteins CTNNBL1, CWC15 and HSPA8. Interacts (via its WD40 repeat domain) directly with CDC5L (via its C-terminal); the interaction is required for mRNA splicing but not for spliceosome assembly. Component of the minor spliceosome, which splices U12-type introns. Within this complex, interacts with CRIPT. Also interacts directly in the complex with BCAS2 and PRPF19. Interacts with USB1.

The protein resides in the nucleus. It localises to the nucleus speckle. Involved in pre-mRNA splicing as component of the spliceosome. Component of the PRP19-CDC5L complex that forms an integral part of the spliceosome and is required for activating pre-mRNA splicing. As a component of the minor spliceosome, involved in the splicing of U12-type introns in pre-mRNAs. This is Pleiotropic regulator 1 (PLRG1) from Bos taurus (Bovine).